The chain runs to 138 residues: Protein FAM136A (138 aa).

This sequence belongs to the FAM136 family.

The sequence is that of Protein FAM136A (fam136a) from Xenopus laevis (African clawed frog).